A 365-amino-acid chain; its full sequence is S-adenosylmethionine:tRNA ribosyltransferase-isomerase (365 aa).

It belongs to the QueA family. As to quaternary structure, monomer.

It is found in the cytoplasm. It carries out the reaction 7-aminomethyl-7-carbaguanosine(34) in tRNA + S-adenosyl-L-methionine = epoxyqueuosine(34) in tRNA + adenine + L-methionine + 2 H(+). The protein operates within tRNA modification; tRNA-queuosine biosynthesis. Its function is as follows. Transfers and isomerizes the ribose moiety from AdoMet to the 7-aminomethyl group of 7-deazaguanine (preQ1-tRNA) to give epoxyqueuosine (oQ-tRNA). The protein is S-adenosylmethionine:tRNA ribosyltransferase-isomerase of Rickettsia conorii (strain ATCC VR-613 / Malish 7).